Reading from the N-terminus, the 346-residue chain is Serpentine receptor class beta-11 (346 aa).

The next 7 helical transmembrane spans lie at 26–46, 57–77, 102–122, 139–159, 186–206, 239–259, and 278–298; these read YQMI…LFKL, TIFI…LTTS, IWNF…CSVT, SVVM…CIIF, FTFF…DLIL, VFLI…VVFF, and TFST…SSFF.

Belongs to the nematode receptor-like protein srb family.

It localises to the membrane. This Caenorhabditis elegans protein is Serpentine receptor class beta-11 (srb-11).